The primary structure comprises 431 residues: Forkhead box protein N2 (431 aa).

Positions K112–S208 form a DNA-binding region, fork-head. Positions D364–K387 are disordered.

Its subcellular location is the nucleus. Binds to the purine-rich region in HTLV-I LTR. The chain is Forkhead box protein N2 (FOXN2) from Homo sapiens (Human).